The primary structure comprises 226 residues: Orotate phosphoribosyltransferase (226 aa).

K30 is a 5-phospho-alpha-D-ribose 1-diphosphate binding site. 38–39 (FF) provides a ligand contact to orotate. 5-phospho-alpha-D-ribose 1-diphosphate contacts are provided by residues 76-77 (YK), R106, K107, K110, H112, and 132-140 (DDVMTAGTA). 2 residues coordinate orotate: T136 and R164.

This sequence belongs to the purine/pyrimidine phosphoribosyltransferase family. PyrE subfamily. Homodimer.

The enzyme catalyses orotidine 5'-phosphate + diphosphate = orotate + 5-phospho-alpha-D-ribose 1-diphosphate. The protein operates within pyrimidine metabolism; UMP biosynthesis via de novo pathway; UMP from orotate: step 1/2. Functionally, catalyzes the transfer of a ribosyl phosphate group from 5-phosphoribose 1-diphosphate to orotate, leading to the formation of orotidine monophosphate (OMP). The sequence is that of Orotate phosphoribosyltransferase (URA5) from Kluyveromyces lactis (strain ATCC 8585 / CBS 2359 / DSM 70799 / NBRC 1267 / NRRL Y-1140 / WM37) (Yeast).